A 76-amino-acid chain; its full sequence is Gallerimycin (76 aa).

Positions 1–19 are cleaved as a signal peptide; that stretch reads MKIAFIVAISLAFLAVTSC.

This sequence belongs to the invertebrate defensin family.

Its function is as follows. Has antifungal activity against the entomopathogenic fungus M.nisopliae, but does not display any antifungal activity against S.cerevisiae nor any antimicrobial activity against M.luteus, B.subtilis, and E.coli. In Galleria mellonella (Greater wax moth), this protein is Gallerimycin (LOC113523440).